The chain runs to 448 residues: Putative F-box/LRR-repeat protein At5g25860 (448 aa).

Residues 11-58 enclose the F-box domain; that stretch reads RDAVNCLPDEILAKILSYLPTKRAVSTSLISKRWRNLFALMIQLFESQ. 5 LRR repeats span residues 82-106, 185-214, 215-240, 310-341, and 342-367; these read QESF…SILC, FLHA…FLHD, LRGY…TVHF, TLSL…YFES, and NEKE…VLKG.

This is Putative F-box/LRR-repeat protein At5g25860 from Arabidopsis thaliana (Mouse-ear cress).